We begin with the raw amino-acid sequence, 1323 residues long: PAS domain-containing serine/threonine-protein kinase (1323 aa).

Met-1 is modified (N-acetylmethionine). Ser-19 carries the post-translational modification Phosphoserine. Residues Leu-20–His-47 are disordered. The segment covering Ala-31–Ser-43 has biased composition (polar residues). Position 34 is a phosphothreonine (Thr-34). 2 PAS domains span residues Ser-119–Asp-190 and Tyr-335–Leu-402. Ser-582 is modified (phosphoserine). Residues Ala-837–Asp-857 are disordered. Position 939 is a phosphoserine (Ser-939). A Protein kinase domain is found at Tyr-999–Val-1251. ATP contacts are provided by residues Leu-1005–Val-1013, Lys-1028, and Glu-1082–Asp-1089. Asp-1128 acts as the Proton acceptor in catalysis. ATP is bound at residue Asp-1146. 2 positions are modified to phosphothreonine; by autocatalysis: Thr-1161 and Thr-1165. The disordered stretch occupies residues Cys-1298–Ser-1323.

The protein belongs to the protein kinase superfamily. CAMK Ser/Thr protein kinase family. Post-translationally, autophosphorylated on Thr-1161 and Thr-1165. Autophosphorylation is activated by phospholipids. Ubiquitously expressed, with slightly higher expression in brain, prostate and testis. Reduced expression was found in placenta. Present in germ cells of testis and in the midpiece of sperm tails (at protein level).

The protein localises to the cytoplasm. Its subcellular location is the nucleus. It catalyses the reaction L-seryl-[protein] + ATP = O-phospho-L-seryl-[protein] + ADP + H(+). It carries out the reaction L-threonyl-[protein] + ATP = O-phospho-L-threonyl-[protein] + ADP + H(+). With respect to regulation, protein kinase activity is inhibited by the first PAS domain: binding of an unidentified ligand desinhibits the protein kinase activity. May be activated by autophosphorylation on Thr-1161 and Thr-1165. The activating role of autophosphorylation at Thr-1161 is unclear: according to a report, autophosphorylation at Thr-1161 does not play a major role in activation. Autophosphorylation is enhanced upon phosphatidylinositol monophosphate (phosphatidylinositol 4-phosphate) binding and inhibited upon phosphatidylinositol bi- and tri-phosphate binding. In contrast, phosphorylation of target proteins is inhibited upon all phosphatidylinositol-binding (phosphatidylinositol mono- bi- and tri-phosphate). Its function is as follows. Serine/threonine-protein kinase involved in energy homeostasis and protein translation. Phosphorylates EEF1A1, GYS1, PDX1 and RPS6. Probably plays a role under changing environmental conditions (oxygen, glucose, nutrition), rather than under standard conditions. Acts as a sensor involved in energy homeostasis: regulates glycogen synthase synthesis by mediating phosphorylation of GYS1, leading to GYS1 inactivation. May be involved in glucose-stimulated insulin production in pancreas and regulation of glucagon secretion by glucose in alpha cells; however such data require additional evidences. May play a role in regulation of protein translation by phosphorylating EEF1A1, leading to increase translation efficiency. May also participate in respiratory regulation. The chain is PAS domain-containing serine/threonine-protein kinase (PASK) from Homo sapiens (Human).